The sequence spans 434 residues: Alpha-enolase (434 aa).

Position 40 (S40) interacts with Mg(2+). Substrate contacts are provided by H158 and E167. E210 functions as the Proton donor in the catalytic mechanism. Mg(2+)-binding residues include D245, E293, and D318. Substrate-binding residues include E293 and D318. Catalysis depends on K343, which acts as the Proton acceptor. Residues 370–373 and K394 contribute to the substrate site; that span reads SHRS.

This sequence belongs to the enolase family. As to quaternary structure, homodimer. The cofactor is Mg(2+).

The protein resides in the cytoplasm. The catalysed reaction is (2R)-2-phosphoglycerate = phosphoenolpyruvate + H2O. It participates in carbohydrate degradation; glycolysis; pyruvate from D-glyceraldehyde 3-phosphate: step 4/5. The chain is Alpha-enolase from Alligator mississippiensis (American alligator).